We begin with the raw amino-acid sequence, 346 residues long: S-adenosylmethionine:tRNA ribosyltransferase-isomerase (346 aa).

It belongs to the QueA family. In terms of assembly, monomer.

It localises to the cytoplasm. The enzyme catalyses 7-aminomethyl-7-carbaguanosine(34) in tRNA + S-adenosyl-L-methionine = epoxyqueuosine(34) in tRNA + adenine + L-methionine + 2 H(+). It functions in the pathway tRNA modification; tRNA-queuosine biosynthesis. Functionally, transfers and isomerizes the ribose moiety from AdoMet to the 7-aminomethyl group of 7-deazaguanine (preQ1-tRNA) to give epoxyqueuosine (oQ-tRNA). This is S-adenosylmethionine:tRNA ribosyltransferase-isomerase from Shewanella frigidimarina (strain NCIMB 400).